The following is a 103-amino-acid chain: Large ribosomal subunit protein bL21 (103 aa).

This sequence belongs to the bacterial ribosomal protein bL21 family. As to quaternary structure, part of the 50S ribosomal subunit. Contacts protein L20.

Functionally, this protein binds to 23S rRNA in the presence of protein L20. The chain is Large ribosomal subunit protein bL21 from Mycobacterium sp. (strain JLS).